The sequence spans 558 residues: Delta-1-pyrroline-5-carboxylate dehydrogenase, mitochondrial (558 aa).

Residues Ser198, Lys223, and 276–280 (GSTGV) each bind NAD(+). Glu306 serves as the catalytic Proton acceptor. Cys340 (nucleophile) is an active-site residue. An NAD(+)-binding site is contributed by Glu438.

Belongs to the aldehyde dehydrogenase family.

It localises to the mitochondrion matrix. It carries out the reaction L-glutamate 5-semialdehyde + NAD(+) + H2O = L-glutamate + NADH + 2 H(+). It functions in the pathway amino-acid degradation; L-proline degradation into L-glutamate; L-glutamate from L-proline: step 2/2. In terms of biological role, irreversible conversion of delta-1-pyrroline-5-carboxylate (P5C), derived either from proline or ornithine, to glutamate. This is a necessary step in the pathway interconnecting the urea and tricarboxylic acid cycles. In Dictyostelium discoideum (Social amoeba), this protein is Delta-1-pyrroline-5-carboxylate dehydrogenase, mitochondrial.